Consider the following 162-residue polypeptide: Cyclic pyranopterin monophosphate synthase (162 aa).

Substrate-binding positions include 75-77 and 113-114; these read LCH and ME. Asp-128 is an active-site residue.

Belongs to the MoaC family. Homohexamer; trimer of dimers.

The catalysed reaction is (8S)-3',8-cyclo-7,8-dihydroguanosine 5'-triphosphate = cyclic pyranopterin phosphate + diphosphate. Its pathway is cofactor biosynthesis; molybdopterin biosynthesis. Its function is as follows. Catalyzes the conversion of (8S)-3',8-cyclo-7,8-dihydroguanosine 5'-triphosphate to cyclic pyranopterin monophosphate (cPMP). The protein is Cyclic pyranopterin monophosphate synthase of Burkholderia cenocepacia (strain HI2424).